We begin with the raw amino-acid sequence, 114 residues long: Nucleoid-associated protein THEYE_A1069 (114 aa).

The protein belongs to the YbaB/EbfC family. As to quaternary structure, homodimer.

It is found in the cytoplasm. The protein localises to the nucleoid. Binds to DNA and alters its conformation. May be involved in regulation of gene expression, nucleoid organization and DNA protection. This is Nucleoid-associated protein THEYE_A1069 from Thermodesulfovibrio yellowstonii (strain ATCC 51303 / DSM 11347 / YP87).